The chain runs to 219 residues: Thiamine-phosphate synthase (219 aa).

4-amino-2-methyl-5-(diphosphooxymethyl)pyrimidine contacts are provided by residues 44–48 and Asn-79; that span reads QFREK. Mg(2+)-binding residues include Asp-80 and Asp-99. Ser-117 contacts 4-amino-2-methyl-5-(diphosphooxymethyl)pyrimidine. Residue 143–145 participates in 2-[(2R,5Z)-2-carboxy-4-methylthiazol-5(2H)-ylidene]ethyl phosphate binding; the sequence is TST. 4-amino-2-methyl-5-(diphosphooxymethyl)pyrimidine is bound at residue Lys-146. Residues Gly-175 and 195-196 each bind 2-[(2R,5Z)-2-carboxy-4-methylthiazol-5(2H)-ylidene]ethyl phosphate; that span reads IS.

This sequence belongs to the thiamine-phosphate synthase family. It depends on Mg(2+) as a cofactor.

The enzyme catalyses 2-[(2R,5Z)-2-carboxy-4-methylthiazol-5(2H)-ylidene]ethyl phosphate + 4-amino-2-methyl-5-(diphosphooxymethyl)pyrimidine + 2 H(+) = thiamine phosphate + CO2 + diphosphate. It carries out the reaction 2-(2-carboxy-4-methylthiazol-5-yl)ethyl phosphate + 4-amino-2-methyl-5-(diphosphooxymethyl)pyrimidine + 2 H(+) = thiamine phosphate + CO2 + diphosphate. It catalyses the reaction 4-methyl-5-(2-phosphooxyethyl)-thiazole + 4-amino-2-methyl-5-(diphosphooxymethyl)pyrimidine + H(+) = thiamine phosphate + diphosphate. It participates in cofactor biosynthesis; thiamine diphosphate biosynthesis; thiamine phosphate from 4-amino-2-methyl-5-diphosphomethylpyrimidine and 4-methyl-5-(2-phosphoethyl)-thiazole: step 1/1. In terms of biological role, condenses 4-methyl-5-(beta-hydroxyethyl)thiazole monophosphate (THZ-P) and 2-methyl-4-amino-5-hydroxymethyl pyrimidine pyrophosphate (HMP-PP) to form thiamine monophosphate (TMP). In Bacillus thuringiensis subsp. konkukian (strain 97-27), this protein is Thiamine-phosphate synthase.